Reading from the N-terminus, the 72-residue chain is uncharacterized protein (72 aa).

The chain crosses the membrane as a helical span at residues 11-31; that stretch reads WCCTVLSAFGVVILSVIAHLF.

The protein localises to the membrane. This is an uncharacterized protein from Saccharomyces cerevisiae (strain ATCC 204508 / S288c) (Baker's yeast).